The following is a 243-amino-acid chain: Ubiquinone biosynthesis O-methyltransferase (243 aa).

Positions 45, 65, 86, and 130 each coordinate S-adenosyl-L-methionine.

This sequence belongs to the methyltransferase superfamily. UbiG/COQ3 family.

The enzyme catalyses a 3-demethylubiquinol + S-adenosyl-L-methionine = a ubiquinol + S-adenosyl-L-homocysteine + H(+). It catalyses the reaction a 3-(all-trans-polyprenyl)benzene-1,2-diol + S-adenosyl-L-methionine = a 2-methoxy-6-(all-trans-polyprenyl)phenol + S-adenosyl-L-homocysteine + H(+). It participates in cofactor biosynthesis; ubiquinone biosynthesis. Functionally, O-methyltransferase that catalyzes the 2 O-methylation steps in the ubiquinone biosynthetic pathway. The protein is Ubiquinone biosynthesis O-methyltransferase of Idiomarina loihiensis (strain ATCC BAA-735 / DSM 15497 / L2-TR).